Here is a 610-residue protein sequence, read N- to C-terminus: Glutamine--fructose-6-phosphate aminotransferase [isomerizing] (610 aa).

Cys-2 serves as the catalytic Nucleophile; for GATase activity. The Glutamine amidotransferase type-2 domain occupies 2–218 (CGIVGAVAQR…EGDVAEITRR (217 aa)). SIS domains are found at residues 286 to 426 (AVEI…QQNR) and 459 to 600 (LAPD…VDQP). The For Fru-6P isomerization activity role is filled by Lys-605.

As to quaternary structure, homodimer.

It is found in the cytoplasm. It carries out the reaction D-fructose 6-phosphate + L-glutamine = D-glucosamine 6-phosphate + L-glutamate. Catalyzes the first step in hexosamine metabolism, converting fructose-6P into glucosamine-6P using glutamine as a nitrogen source. The sequence is that of Glutamine--fructose-6-phosphate aminotransferase [isomerizing] from Aliivibrio fischeri (strain ATCC 700601 / ES114) (Vibrio fischeri).